Consider the following 274-residue polypeptide: Nitrogenase iron protein (274 aa).

8-15 (GKGGIGKS) serves as a coordination point for ATP. Residue cysteine 94 participates in [4Fe-4S] cluster binding. Arginine 97 bears the ADP-ribosylarginine; by dinitrogenase reductase ADP-ribosyltransferase mark. Cysteine 131 is a [4Fe-4S] cluster binding site.

The protein belongs to the NifH/BchL/ChlL family. As to quaternary structure, homodimer. [4Fe-4S] cluster is required as a cofactor. Post-translationally, the reversible ADP-ribosylation of Arg-97 inactivates the nitrogenase reductase and regulates nitrogenase activity.

The enzyme catalyses N2 + 8 reduced [2Fe-2S]-[ferredoxin] + 16 ATP + 16 H2O = H2 + 8 oxidized [2Fe-2S]-[ferredoxin] + 2 NH4(+) + 16 ADP + 16 phosphate + 6 H(+). Functionally, the key enzymatic reactions in nitrogen fixation are catalyzed by the nitrogenase complex, which has 2 components: the iron protein and the molybdenum-iron protein. The polypeptide is Nitrogenase iron protein (Azobacteroides pseudotrichonymphae genomovar. CFP2).